The chain runs to 81 residues: MSEEQPTFEENLATLETIVAQLEQGDIPLEQALTQFQKGVALSKELQTTLQDAEKTLTTMMNDSDQEVAFETPQGGTGDAD.

The tract at residues 61-81 is disordered; it reads MNDSDQEVAFETPQGGTGDAD.

This sequence belongs to the XseB family. In terms of assembly, heterooligomer composed of large and small subunits.

It is found in the cytoplasm. It catalyses the reaction Exonucleolytic cleavage in either 5'- to 3'- or 3'- to 5'-direction to yield nucleoside 5'-phosphates.. In terms of biological role, bidirectionally degrades single-stranded DNA into large acid-insoluble oligonucleotides, which are then degraded further into small acid-soluble oligonucleotides. In Levilactobacillus brevis (strain ATCC 367 / BCRC 12310 / CIP 105137 / JCM 1170 / LMG 11437 / NCIMB 947 / NCTC 947) (Lactobacillus brevis), this protein is Exodeoxyribonuclease 7 small subunit.